A 122-amino-acid polypeptide reads, in one-letter code: Large ribosomal subunit protein uL18 (122 aa).

This sequence belongs to the universal ribosomal protein uL18 family. Part of the 50S ribosomal subunit; part of the 5S rRNA/L5/L18/L25 subcomplex. Contacts the 5S and 23S rRNAs.

This is one of the proteins that bind and probably mediate the attachment of the 5S RNA into the large ribosomal subunit, where it forms part of the central protuberance. The protein is Large ribosomal subunit protein uL18 of Prochlorococcus marinus (strain MIT 9301).